The sequence spans 1893 residues: Protein TIC 214 (1893 aa).

The next 6 membrane-spanning stretches (helical) occupy residues 18-38 (IINS…FSIG), 63-83 (AITG…YAPL), 87-107 (LGRP…HFFW), 127-147 (LSIQ…HFIL), 175-195 (VGWL…LVWI), and 224-244 (IFSI…PSPI). 2 stretches are compositionally biased toward basic and acidic residues: residues 249 to 258 (MKETSETEER) and 268 to 287 (EIER…RSTE). A disordered region spans residues 249–317 (MKETSETEER…TEEIRVNGKE (69 aa)). The segment covering 298 to 309 (EKEDPDKIDETE) has biased composition (acidic residues). The helical transmembrane segment at 1126–1146 (LHYFIKFFIERIYIDILLCLI) threads the bilayer.

The protein belongs to the TIC214 family. Part of the Tic complex.

It localises to the plastid. The protein resides in the chloroplast inner membrane. Functionally, involved in protein precursor import into chloroplasts. May be part of an intermediate translocation complex acting as a protein-conducting channel at the inner envelope. The chain is Protein TIC 214 from Vitis vinifera (Grape).